The following is a 98-amino-acid chain: NADH-ubiquinone oxidoreductase chain 4L (98 aa).

3 helical membrane passes run 1 to 21, 29 to 49, and 61 to 81; these read MTLI…GLLM, ALLC…LTIL, and IILL…LVMV.

Belongs to the complex I subunit 4L family. As to quaternary structure, core subunit of respiratory chain NADH dehydrogenase (Complex I) which is composed of 45 different subunits.

The protein resides in the mitochondrion inner membrane. It catalyses the reaction a ubiquinone + NADH + 5 H(+)(in) = a ubiquinol + NAD(+) + 4 H(+)(out). Core subunit of the mitochondrial membrane respiratory chain NADH dehydrogenase (Complex I) which catalyzes electron transfer from NADH through the respiratory chain, using ubiquinone as an electron acceptor. Part of the enzyme membrane arm which is embedded in the lipid bilayer and involved in proton translocation. This Megaptera novaeangliae (Humpback whale) protein is NADH-ubiquinone oxidoreductase chain 4L (MT-ND4L).